Reading from the N-terminus, the 167-residue chain is V-type proton ATPase subunit c' (167 aa).

The Lumenal portion of the chain corresponds to 1-13 (MAEIMADSELAPK). A helical transmembrane segment spans residues 14-34 (FAPFIGMAGIAAAMIFGSAGA). The Cytoplasmic portion of the chain corresponds to 35 to 59 (AYGTAKSGIGIAGVGTFRPDLIMKC). The chain crosses the membrane as a helical span at residues 60–80 (LIPVVMSGIIAVYALVVAVLI). The Lumenal portion of the chain corresponds to 81–101 (AQDLGPPGSGQHYSLFNGFMH). A helical membrane pass occupies residues 102–122 (LACGLSVGLTGLAAGYCIGIV). Over 123–140 (GDKGVRSFMLQSRIFVGM) the chain is Cytoplasmic. A helical membrane pass occupies residues 141–161 (VLILIFGEVLGLYGLIVALIL). The Lumenal segment spans residues 162–167 (NTKSKG).

This sequence belongs to the V-ATPase proteolipid subunit family. As to quaternary structure, V-ATPase is a heteromultimeric enzyme composed of a peripheral catalytic V1 complex (components A to H) attached to an integral membrane V0 proton pore complex (components: a, c, c', c'', d, e, f and VOA1). The decameric c-ring forms the proton-conducting pore, and is composed of eight proteolipid subunits c, one subunit c' and one subunit c''.

The protein localises to the vacuole membrane. Functionally, proton-conducting pore forming subunit of the V0 complex of vacuolar(H+)-ATPase (V-ATPase), a multisubunit enzyme composed of a peripheral complex (V1) that hydrolyzes ATP and a membrane integral complex (V0) that translocates protons. V-ATPase is responsible for acidifying and maintaining the pH of intracellular compartments. In Neurospora crassa (strain ATCC 24698 / 74-OR23-1A / CBS 708.71 / DSM 1257 / FGSC 987), this protein is V-type proton ATPase subunit c' (vma-11).